Reading from the N-terminus, the 1263-residue chain is DNA-directed RNA polymerase subunit beta (1263 aa).

The protein belongs to the RNA polymerase beta chain family. As to quaternary structure, the RNAP catalytic core consists of 2 alpha, 1 beta, 1 beta' and 1 omega subunit. When a sigma factor is associated with the core the holoenzyme is formed, which can initiate transcription.

It catalyses the reaction RNA(n) + a ribonucleoside 5'-triphosphate = RNA(n+1) + diphosphate. In terms of biological role, DNA-dependent RNA polymerase catalyzes the transcription of DNA into RNA using the four ribonucleoside triphosphates as substrates. This is DNA-directed RNA polymerase subunit beta from Thermotoga sp. (strain RQ2).